We begin with the raw amino-acid sequence, 1060 residues long: Protocadherin-1 (1060 aa).

The N-terminal stretch at Met1–Ala57 is a signal peptide. 7 consecutive Cadherin domains span residues Thr58 to Phe168, Ala169 to Phe280, Glu281 to Ile387, Thr396 to Phe506, Thr507 to Phe612, Met613 to Ile715, and Pro718 to Tyr844. At Thr58–Asn852 the chain is on the extracellular side. Residues Asn305 and Asn403 are each glycosylated (N-linked (GlcNAc...) asparagine). Residues Asn618, Asn662, Asn813, and Asn818 are each glycosylated (N-linked (GlcNAc...) asparagine). Residues Ile853 to Leu873 traverse the membrane as a helical segment. Residues Val874 to Glu1060 lie on the Cytoplasmic side of the membrane. Basic and acidic residues predominate over residues Ser884–Tyr897. Positions Ser884–Pro1045 are disordered. Residues Lys907–Lys920 are compositionally biased toward basic residues. Phosphoserine occurs at positions 918, 949, 962, and 984. Over residues Ser973–Ser986 the composition is skewed to low complexity. Polar residues-rich tracts occupy residues Phe1003–Thr1024 and Gln1033–Pro1043.

Highly expressed in the brain and neuro-glial cells.

It is found in the cell junction. It localises to the cell membrane. In terms of biological role, may be involved in cell-cell interaction processes and in cell adhesion. The protein is Protocadherin-1 (PCDH1) of Homo sapiens (Human).